A 363-amino-acid polypeptide reads, in one-letter code: Phospho-N-acetylmuramoyl-pentapeptide-transferase (363 aa).

The next 9 membrane-spanning stretches (helical) occupy residues 13 to 33 (ISGI…AFFL), 49 to 69 (LPLL…IPLL), 95 to 115 (MGGI…SNFA), 119 to 139 (LAVS…DWQI), 154 to 174 (LALQ…NQPS), 183 to 203 (WVSF…FVLV), 224 to 244 (AIAL…LMVF), 281 to 301 (AVAL…IFFV), and 343 to 363 (ELQV…ICLA).

Belongs to the glycosyltransferase 4 family. MraY subfamily. Mg(2+) is required as a cofactor.

Its subcellular location is the cell inner membrane. The enzyme catalyses UDP-N-acetyl-alpha-D-muramoyl-L-alanyl-gamma-D-glutamyl-meso-2,6-diaminopimeloyl-D-alanyl-D-alanine + di-trans,octa-cis-undecaprenyl phosphate = di-trans,octa-cis-undecaprenyl diphospho-N-acetyl-alpha-D-muramoyl-L-alanyl-D-glutamyl-meso-2,6-diaminopimeloyl-D-alanyl-D-alanine + UMP. It participates in cell wall biogenesis; peptidoglycan biosynthesis. In terms of biological role, catalyzes the initial step of the lipid cycle reactions in the biosynthesis of the cell wall peptidoglycan: transfers peptidoglycan precursor phospho-MurNAc-pentapeptide from UDP-MurNAc-pentapeptide onto the lipid carrier undecaprenyl phosphate, yielding undecaprenyl-pyrophosphoryl-MurNAc-pentapeptide, known as lipid I. This is Phospho-N-acetylmuramoyl-pentapeptide-transferase from Nostoc punctiforme (strain ATCC 29133 / PCC 73102).